We begin with the raw amino-acid sequence, 543 residues long: Chaperonin GroEL (543 aa).

ATP contacts are provided by residues 29-32, 86-90, G413, 478-480, and D494; these read TLGP, DGTTT, and NAA.

It belongs to the chaperonin (HSP60) family. Forms a cylinder of 14 subunits composed of two heptameric rings stacked back-to-back. Interacts with the co-chaperonin GroES.

The protein localises to the cytoplasm. It carries out the reaction ATP + H2O + a folded polypeptide = ADP + phosphate + an unfolded polypeptide.. In terms of biological role, together with its co-chaperonin GroES, plays an essential role in assisting protein folding. The GroEL-GroES system forms a nano-cage that allows encapsulation of the non-native substrate proteins and provides a physical environment optimized to promote and accelerate protein folding. The sequence is that of Chaperonin GroEL from Lactobacillus gasseri (strain ATCC 33323 / DSM 20243 / BCRC 14619 / CIP 102991 / JCM 1131 / KCTC 3163 / NCIMB 11718 / NCTC 13722 / AM63).